Here is a 494-residue protein sequence, read N- to C-terminus: ATP synthase subunit beta (494 aa).

Residue 177–184 (GGAGVGKT) participates in ATP binding.

Belongs to the ATPase alpha/beta chains family. In terms of assembly, F-type ATPases have 2 components, CF(1) - the catalytic core - and CF(0) - the membrane proton channel. CF(1) has five subunits: alpha(3), beta(3), gamma(1), delta(1), epsilon(1). CF(0) has three main subunits: a(1), b(2) and c(9-12). The alpha and beta chains form an alternating ring which encloses part of the gamma chain. CF(1) is attached to CF(0) by a central stalk formed by the gamma and epsilon chains, while a peripheral stalk is formed by the delta and b chains.

Its subcellular location is the cell membrane. It catalyses the reaction ATP + H2O + 4 H(+)(in) = ADP + phosphate + 5 H(+)(out). Produces ATP from ADP in the presence of a proton gradient across the membrane. The catalytic sites are hosted primarily by the beta subunits. In Bifidobacterium adolescentis (strain ATCC 15703 / DSM 20083 / NCTC 11814 / E194a), this protein is ATP synthase subunit beta.